A 683-amino-acid polypeptide reads, in one-letter code: Methionine--tRNA ligase (683 aa).

The 'HIGH' region motif lies at 14 to 24 (PYANGSIHLGH). Zn(2+) contacts are provided by C145, C148, C158, and C161. Residues 331-335 (KMSKS) carry the 'KMSKS' region motif. K334 is an ATP binding site. Positions 545-572 (ASKEDLTASQTDTGAAAPAGNGELAKDP) are disordered. A tRNA-binding domain is found at 581 to 683 (TFAAVDLRVA…SGAKPGQRIK (103 aa)).

This sequence belongs to the class-I aminoacyl-tRNA synthetase family. MetG type 1 subfamily. In terms of assembly, homodimer. It depends on Zn(2+) as a cofactor.

Its subcellular location is the cytoplasm. It carries out the reaction tRNA(Met) + L-methionine + ATP = L-methionyl-tRNA(Met) + AMP + diphosphate. In terms of biological role, is required not only for elongation of protein synthesis but also for the initiation of all mRNA translation through initiator tRNA(fMet) aminoacylation. The chain is Methionine--tRNA ligase from Pseudomonas fluorescens (strain Pf0-1).